The following is a 634-amino-acid chain: Threonine--tRNA ligase (634 aa).

A TGS domain is found at 1-61 (MFEVKLKDGS…DSDCEVQFVK (61 aa)). The tract at residues 242–532 (DHRKIGKEMG…LIEHYAGKFP (291 aa)) is catalytic. Zn(2+) is bound by residues C333, H384, and H509.

It belongs to the class-II aminoacyl-tRNA synthetase family. Homodimer. The cofactor is Zn(2+).

The protein localises to the cytoplasm. It catalyses the reaction tRNA(Thr) + L-threonine + ATP = L-threonyl-tRNA(Thr) + AMP + diphosphate + H(+). Catalyzes the attachment of threonine to tRNA(Thr) in a two-step reaction: L-threonine is first activated by ATP to form Thr-AMP and then transferred to the acceptor end of tRNA(Thr). Also edits incorrectly charged L-seryl-tRNA(Thr). The protein is Threonine--tRNA ligase of Finegoldia magna (strain ATCC 29328 / DSM 20472 / WAL 2508) (Peptostreptococcus magnus).